The following is a 297-amino-acid chain: Carbamate kinase (297 aa).

Belongs to the carbamate kinase family.

Its subcellular location is the cytoplasm. The catalysed reaction is hydrogencarbonate + NH4(+) + ATP = carbamoyl phosphate + ADP + H2O + H(+). It catalyses the reaction carbamate + ATP = carbamoyl phosphate + ADP. The enzyme catalyses hydrogencarbonate + NH4(+) = carbamate + H2O + H(+). Its pathway is nitrogen metabolism; (S)-allantoin degradation. In terms of biological role, kinase involved in the anaerobic nitrogen utilization via the assimilation of allantoin. Catalyzes the transfer of a phosphate group from carbamoyl phosphate to ADP to produce ATP and leave carbamate, which spontaneously hydrolyzes to ammonia and hydrogencarbonate. The polypeptide is Carbamate kinase (Escherichia coli O6:H1 (strain CFT073 / ATCC 700928 / UPEC)).